A 154-amino-acid polypeptide reads, in one-letter code: Decarboxylase claH (154 aa).

The protein belongs to the tpcK family.

The catalysed reaction is atrochrysone carboxylate + H(+) = atrochrysone + CO2. It functions in the pathway pigment biosynthesis. Functionally, decarboxylase involved in the biosynthesis of the bianthraquinone cladofulvin, a conidial pigment not required for virulence but that plays a role in fitness and resistance to environmental stresses including UV light and low-temperature stress. The pathway begins with the synthesis of atrochrysone thioester by the polyketide synthase (PKS) claG. The atrochrysone carboxyl ACP thioesterase claF then breaks the thioester bond and releases the atrochrysone carboxylic acid from claG. This compound is decarboxylated by claH to yield emodin, which is further converted to chrysophanol hydroquinone by the reductase claC and the dehydratase claB. The cytochrome monooxygenase P450 claM then catalyzes the dimerization of nataloe-emodin to cladofulvin. This is Decarboxylase claH from Passalora fulva (Tomato leaf mold).